The primary structure comprises 98 residues: Conotoxin Di19A (98 aa).

Positions 1–19 are cleaved as a signal peptide; it reads MSTLGILLPIALLLPLANP. Residues 20 to 49 constitute a propeptide that is removed on maturation; it reads AENGDGQAMPRTRNLRSLSFGRTLRRLEKR. Residue Pro-53 is modified to 4-hydroxyproline. Glu-63 carries the 4-carboxyglutamate modification. A 4-hydroxyproline mark is found at Pro-68, Pro-93, and Pro-97.

In terms of processing, contains 5 disulfide bonds. Expressed by the venom duct.

The protein resides in the secreted. Functionally, injection of the synthetic peptide causes a hyperexcitable phenotype in mice greater than three weeks of age at lower doses, and lethargy at higher doses. The protein is Conotoxin Di19A of Conus distans (Distant cone).